A 185-amino-acid chain; its full sequence is Lectin B4 (185 aa).

The N-linked (GlcNAc...) asparagine glycan is linked to Asn-48. Residues Glu-111 and Asp-113 each contribute to the Mn(2+) site. Ca(2+) is bound by residues Asp-113, Tyr-115, Asn-117, and Asp-120. Asp-120 contributes to the Mn(2+) binding site. An N-linked (GlcNAc...) asparagine glycan is attached at Asn-122. His-125 is a binding site for Mn(2+).

The protein belongs to the leguminous lectin family. As to quaternary structure, homo- or heterotetramer. V.villosa isolectins are composed of either two subunits a and two subunits B (A2B2), four subunits A (A4), or four subunits B (B4). The predominant form, isolectin B4, has no A1 erythrocyte agglutinating activity.

Its function is as follows. N-acetyl-D-galactosamine specific lectin. Binds the Tn determinant (GalNAc-alpha-O-Ser/Thr) of the tumor-associated glycopeptide. Could be required for agglutinating cells such as Tn-exposed erythrocytes. In Vicia villosa (Hairy vetch), this protein is Lectin B4.